A 170-amino-acid polypeptide reads, in one-letter code: Calcineurin subunit B type 2 (170 aa).

Glycine 2 carries N-myristoyl glycine lipidation. EF-hand domains lie at 18–46 (DEIKRLGRRFKKLDLDKSGSLSVEEFMSL), 50–85 (RHNPLVRRVIDVFDTDGDGEVDFKEFILGTSQFSVK), 87–122 (DEEQKLRFAFSIYDMDKDGYISNGELFQVLKMMVGN), and 128–163 (QLQQLVDKTIIILDKDGDGKISFEEFSAVVRDLEIH). Residues aspartate 31, aspartate 33, serine 35, serine 37, glutamate 42, aspartate 63, aspartate 65, aspartate 67, glutamate 69, glutamate 74, aspartate 100, aspartate 102, aspartate 104, tyrosine 106, and glutamate 111 each coordinate Ca(2+). The tract at residues 131–136 (QLVDKT) is calcineurin A binding. Residues aspartate 141, aspartate 143, aspartate 145, lysine 147, and glutamate 152 each contribute to the Ca(2+) site.

The protein belongs to the calcineurin regulatory subunit family. In terms of assembly, forms a complex composed of a calmodulin-dependent catalytic subunit (also known as calcineurin A) and a regulatory Ca(2+)-binding subunit (also known as calcineurin B). There are three catalytic subunits, each encoded by a separate gene (PPP3CA, PPP3CB, and PPP3CC) and two regulatory subunits which are also encoded by separate genes (PPP3R1 and PPP3R2). Interacts with SPATA33 (via PQIIIT motif). Testis-specific.

The protein localises to the mitochondrion. Functionally, regulatory subunit of calcineurin, a calcium-dependent, calmodulin stimulated protein phosphatase. Confers calcium sensitivity. The chain is Calcineurin subunit B type 2 (PPP3R2) from Homo sapiens (Human).